The chain runs to 125 residues: UPF0102 protein CCNA_00142 (125 aa).

Belongs to the UPF0102 family.

The protein is UPF0102 protein CCNA_00142 of Caulobacter vibrioides (strain NA1000 / CB15N) (Caulobacter crescentus).